The sequence spans 185 residues: MKTHNDILAALAALPLFLTGAAFAAEPGMLDTLRNNIVQTWEQPQHYDLYLPAITWHARFAYSQEKIDSYNERPWGAGFGQSRWDEKGNWHGLYLMAFKDSFNKWEPIGGYGWEATWRPLEGSDFHWGAGYTVGVTMRDNWRYIPIPVILPMASVGYGPLTLQMTYIPGTYDNGNVYFAWLRLQF.

The N-terminal stretch at 1–24 (MKTHNDILAALAALPLFLTGAAFA) is a signal peptide. Catalysis depends on residues His57, Asp100, and Ser101.

It belongs to the lipid A palmitoyltransferase family. Homodimer.

It is found in the cell outer membrane. The catalysed reaction is a lipid A + a 1,2-diacyl-sn-glycero-3-phosphocholine = a hepta-acyl lipid A + a 2-acyl-sn-glycero-3-phosphocholine. It catalyses the reaction a lipid IVA + a 1,2-diacyl-sn-glycero-3-phosphocholine = a lipid IVB + a 2-acyl-sn-glycero-3-phosphocholine. It carries out the reaction a lipid IIA + a 1,2-diacyl-sn-glycero-3-phosphocholine = a lipid IIB + a 2-acyl-sn-glycero-3-phosphocholine. Functionally, transfers a fatty acid residue from the sn-1 position of a phospholipid to the N-linked hydroxyfatty acid chain on the proximal unit of lipid A or its precursors. This is Lipid A acyltransferase PagP from Edwardsiella tarda (strain FL6-60).